We begin with the raw amino-acid sequence, 327 residues long: Thiamine-binding periplasmic protein (327 aa).

Positions Met1 to Ala18 are cleaved as a signal peptide. Residues Asp59 to Gly60, Ser161 to Thr162, Trp197, and Tyr215 to Ser218 each bind thiamine.

It belongs to the bacterial solute-binding protein 1 family. In terms of assembly, the complex is composed of two ATP-binding proteins (ThiQ), two transmembrane proteins (ThiP) and a solute-binding protein (ThiB).

The protein resides in the periplasm. Functionally, part of the ABC transporter complex ThiBPQ involved in thiamine import. Is also involved in thiamine pyrophosphate transport. This is Thiamine-binding periplasmic protein from Salmonella typhimurium (strain LT2 / SGSC1412 / ATCC 700720).